Here is a 372-residue protein sequence, read N- to C-terminus: N-methyl-L-tryptophan oxidase (372 aa).

Residue 4-34 (DLIIIGSGSVGAAAGYYATRAGLKVLMTDAH) participates in FAD binding. C307 bears the S-8alpha-FAD cysteine mark.

The protein belongs to the MSOX/MTOX family. MTOX subfamily. Monomer. The cofactor is FAD.

It catalyses the reaction N(alpha)-methyl-L-tryptophan + O2 + H2O = L-tryptophan + formaldehyde + H2O2. Catalyzes the oxidative demethylation of N-methyl-L-tryptophan. The sequence is that of N-methyl-L-tryptophan oxidase from Citrobacter koseri (strain ATCC BAA-895 / CDC 4225-83 / SGSC4696).